A 572-amino-acid polypeptide reads, in one-letter code: AAA ATPase forming ring-shaped complexes (572 aa).

The segment covering 1 to 18 (MTTASQQTSSHSTASSTS) has biased composition (low complexity). The segment at 1–30 (MTTASQQTSSHSTASSTSRKGNNNDATPSL) is disordered. A coiled-coil region spans residues 42 to 70 (TRNAKLVEMLKASRDKLDALNEQIRALSD). 258-263 (GCGKTL) contributes to the ATP binding site. The tract at residues 543–572 (VAHHNRKTTTETEATEPEGTDSGKGHTDAS) is disordered. A compositionally biased stretch (basic and acidic residues) spans 563-572 (DSGKGHTDAS).

Belongs to the AAA ATPase family. In terms of assembly, homohexamer. Assembles into a hexameric ring structure.

This is AAA ATPase forming ring-shaped complexes from Corynebacterium kroppenstedtii (strain DSM 44385 / JCM 11950 / CIP 105744 / CCUG 35717).